Reading from the N-terminus, the 138-residue chain is Basic phospholipase A2 RV-4 (138 aa).

The first 16 residues, 1 to 16 (MRTLWIVAVCLIGVEG), serve as a signal peptide directing secretion. 7 cysteine pairs are disulfide-bonded: Cys42/Cys131, Cys44/Cys60, Cys59/Cys111, Cys65/Cys138, Cys66/Cys104, Cys73/Cys97, and Cys91/Cys102. Tyr43, Gly45, and Gly47 together coordinate Ca(2+). His63 is a catalytic residue. Asp64 serves as a coordination point for Ca(2+). The active site involves Asp105.

The protein belongs to the phospholipase A2 family. Group II subfamily. D49 sub-subfamily. Heterodimer of a weakly toxic basic protein having phospholipase A2 activity (RV-4) and a non-toxic acidic protein which inhibits its enzymatic activity but potentiates its lethal potency and neurotoxicity (RV-7). The cofactor is Ca(2+). As to expression, expressed by the venom gland.

The protein resides in the secreted. It catalyses the reaction a 1,2-diacyl-sn-glycero-3-phosphocholine + H2O = a 1-acyl-sn-glycero-3-phosphocholine + a fatty acid + H(+). In terms of biological role, heterodimer RV-4/RV-7: acts as a presynaptic neurotoxin. Functionally, monomer: snake venom phospholipase A2 (PLA2) that acts as a presynaptic neurotoxin. PLA2 catalyzes the calcium-dependent hydrolysis of the 2-acyl groups in 3-sn-phosphoglycerides. The sequence is that of Basic phospholipase A2 RV-4 from Daboia siamensis (Eastern Russel's viper).